Consider the following 185-residue polypeptide: Elongation factor P (185 aa).

This sequence belongs to the elongation factor P family.

It localises to the cytoplasm. The protein operates within protein biosynthesis; polypeptide chain elongation. In terms of biological role, involved in peptide bond synthesis. Stimulates efficient translation and peptide-bond synthesis on native or reconstituted 70S ribosomes in vitro. Probably functions indirectly by altering the affinity of the ribosome for aminoacyl-tRNA, thus increasing their reactivity as acceptors for peptidyl transferase. The protein is Elongation factor P of Moorella thermoacetica (strain ATCC 39073 / JCM 9320).